The following is a 455-amino-acid chain: UDP-glycosyltransferase 75B2 (455 aa).

Residue H16 is the Proton acceptor of the active site. Position 16 (H16) interacts with an anthocyanidin. UDP-alpha-D-glucose contacts are provided by Q337, H352, W355, S357, E360, D376, and Q377.

Belongs to the UDP-glycosyltransferase family.

It catalyses the reaction (indol-3-yl)acetate + UDP-alpha-D-glucose = 1-O-(indol-3-ylacetyl)-beta-D-glucose + UDP. Its pathway is plant hormone metabolism; auxin conjugation. Its function is as follows. Possesses low catalytic activity in vitro. Also active as glucosyltransferase in vitro on benzoates and benzoate derivatives. This chain is UDP-glycosyltransferase 75B2 (UGT75B2), found in Arabidopsis thaliana (Mouse-ear cress).